A 122-amino-acid chain; its full sequence is uncharacterized protein (122 aa).

To B.subtilis YpdA.

This is an uncharacterized protein from Bacillus licheniformis.